Here is a 209-residue protein sequence, read N- to C-terminus: Kynurenine formamidase (209 aa).

Phenylalanine 18 provides a ligand contact to substrate. Residues histidine 48, histidine 52, and aspartate 54 each coordinate Zn(2+). Residue histidine 58 is the Proton donor/acceptor of the active site. The Zn(2+) site is built by histidine 160 and glutamate 172.

It belongs to the Cyclase 1 superfamily. KynB family. Homodimer. It depends on Zn(2+) as a cofactor.

The enzyme catalyses N-formyl-L-kynurenine + H2O = L-kynurenine + formate + H(+). Its pathway is amino-acid degradation; L-tryptophan degradation via kynurenine pathway; L-kynurenine from L-tryptophan: step 2/2. In terms of biological role, catalyzes the hydrolysis of N-formyl-L-kynurenine to L-kynurenine, the second step in the kynurenine pathway of tryptophan degradation. The protein is Kynurenine formamidase of Bordetella petrii (strain ATCC BAA-461 / DSM 12804 / CCUG 43448).